Reading from the N-terminus, the 131-residue chain is Chromatin accessibility complex protein 1 (131 aa).

Alanine 2 is modified (N-acetylalanine). Residues 100-124 adopt a coiled-coil conformation; the sequence is ASKYLKMLKEEKREEDEENDNDNES. Lysine 102 is subject to N6-acetyllysine. The tract at residues 109 to 131 is disordered; sequence EEKREEDEENDNDNESDHDEADS. Residues 112–131 are compositionally biased toward acidic residues; sequence REEDEENDNDNESDHDEADS. Serine 124 carries the post-translational modification Phosphoserine.

In terms of assembly, heterodimer with POLE3; binds to DNA. Component of the CHRAC ISWI chromatin remodeling complex at least composed of SMARCA5/SNF2H, BAZ1A/ACF1, CHRAC1 and POLE3; the complex preferentially binds DNA through the CHRAC1-POLE3 heterodimer and possesses ATP-dependent nucleosome-remodeling activity. Within the complex, the heterodimer with POLE3 interacts with SMARCA5/SNF2H; the interaction is direct and enhances nucleosome sliding activity by the SMARCA5/SNF2H and BAZ1A/ACF1 interaction. Within the complex, the heterodimer with POLE3 interacts with BAZ1A/ACF1; the interactions are direct. Expressed in heart, brain, placenta, lung, liver, skeletal muscle, kidney and pancreas.

It localises to the nucleus. Functionally, forms a complex with DNA polymerase epsilon subunit POLE3 and binds naked DNA, which is then incorporated into chromatin, aided by the nucleosome remodeling activity of ISWI/SNF2H and ACF1. Does not enhance nucleosome sliding activity of the ACF-5 ISWI chromatin remodeling complex. The polypeptide is Chromatin accessibility complex protein 1 (CHRAC1) (Homo sapiens (Human)).